Reading from the N-terminus, the 493-residue chain is CBL-interacting protein kinase 26 (493 aa).

One can recognise a Protein kinase domain in the interval 12 to 266 (YEIGRQLGQG…IPKIKRSAWY (255 aa)). ATP is bound by residues 18–26 (LGQGNFAKV) and K41. Residue D134 is the Proton acceptor of the active site. Residues 152-181 (DFGLSALSESKRHDGLLHTTCGTPAYVAPE) form an activation loop region. Residues 311–332 (KVYTNGEATTSDSPECSNSDGK) are disordered. The segment covering 316–332 (GEATTSDSPECSNSDGK) has biased composition (polar residues). In terms of domain architecture, NAF spans 320–360 (TSDSPECSNSDGKQASLSLPNLNAFDIISLSTGFDLSNLFE). The tract at residues 365–394 (RREERFTTRQPAAAIFAKLNELARRFKLKI) is PPI. The tract at residues 465 to 493 (GQHQQPEQSMQGMQGEQQPSRLPSQQPQG) is disordered.

This sequence belongs to the protein kinase superfamily. CAMK Ser/Thr protein kinase family. SNF1 subfamily. The cofactor is Mn(2+).

The enzyme catalyses L-seryl-[protein] + ATP = O-phospho-L-seryl-[protein] + ADP + H(+). The catalysed reaction is L-threonyl-[protein] + ATP = O-phospho-L-threonyl-[protein] + ADP + H(+). In terms of biological role, CIPK serine-threonine protein kinases interact with CBL proteins. Binding of a CBL protein to the regulatory NAF domain of CIPK protein lead to the activation of the kinase in a calcium-dependent manner. In Oryza sativa subsp. japonica (Rice), this protein is CBL-interacting protein kinase 26 (CIPK26).